The primary structure comprises 617 residues: DNA-(apurinic or apyrimidinic site) endonuclease (617 aa).

Residues 74-99 (IKNSDEQNNSNNNNNNSSSSNFCSNN) form a disordered region. Positions 81–99 (NNSNNNNNNSSSSNFCSNN) are enriched in low complexity. Mg(2+) is bound by residues N284 and E317. Residues 326–349 (SEPCDNKNKNKNKNDGIRDRGKIK) form a disordered region. Over residues 329–349 (CDNKNKNKNKNDGIRDRGKIK) the composition is skewed to basic and acidic residues. Residues D474, N476, D606, and H607 each contribute to the Mg(2+) site. Catalysis depends on H607, which acts as the Proton acceptor.

The protein belongs to the DNA repair enzymes AP/ExoA family. The cofactor is Mg(2+). Mn(2+) serves as cofactor. May be proteolytically cleaved into a 64 kDa form.

It localises to the mitochondrion. The catalysed reaction is Exonucleolytic cleavage in the 3'- to 5'-direction to yield nucleoside 5'-phosphates.. Apurinic/apyrimidinic (AP) endonuclease activity is maximal at low Mg(2+) (0.5-2 mM) with no activity seen at high concentrations (more than 10 mM). 3'-5' exonuclease activity is maximal in the range of 0.5-2 mM Mg(2+) with activity seen up to 10 mM Mg(2+). Its function is as follows. Multifunctional protein that plays a central role in mitochondrial DNA base excision repair (BER) pathway induced by oxidative stress. Has apurinic/apyrimidinic (AP) endonuclease activity towards double-stranded DNA (dsDNA). Has nucleotide incision repair (NIR) activity; acts on dsDNA with oxidized bases thymine glycol and 5,6-dihydro-2'-deoxyuridine. Has 3'-5' exonuclease; can use dsDNA templates with 3'-OH termini including blunt-end, gapped and mismatched 3'-recessed. Has 3'-phosphatase activity; cleaves 3'-phosphate from blunt, recessed and gapped dsDNA templates, followed by 3'-5' exonuclease activity. Has RNase H-like activity; cleaves RNA on 3'-recessed RNA-DNA duplex. Plays a role in merosome infection of host erythrocytes. The polypeptide is DNA-(apurinic or apyrimidinic site) endonuclease (Plasmodium falciparum (isolate 3D7)).